A 339-amino-acid polypeptide reads, in one-letter code: Tetraacyldisaccharide 4'-kinase (339 aa).

58-65 lines the ATP pocket; sequence TVGGSGKT.

This sequence belongs to the LpxK family.

It carries out the reaction a lipid A disaccharide + ATP = a lipid IVA + ADP + H(+). It participates in glycolipid biosynthesis; lipid IV(A) biosynthesis; lipid IV(A) from (3R)-3-hydroxytetradecanoyl-[acyl-carrier-protein] and UDP-N-acetyl-alpha-D-glucosamine: step 6/6. Transfers the gamma-phosphate of ATP to the 4'-position of a tetraacyldisaccharide 1-phosphate intermediate (termed DS-1-P) to form tetraacyldisaccharide 1,4'-bis-phosphate (lipid IVA). This is Tetraacyldisaccharide 4'-kinase from Shewanella baltica (strain OS195).